Here is a 285-residue protein sequence, read N- to C-terminus: Acetyl-coenzyme A carboxylase carboxyl transferase subunit beta (285 aa).

Residues Ile-29–Lys-285 form the CoA carboxyltransferase N-terminal domain. Positions 33, 36, 52, and 55 each coordinate Zn(2+). Residues Cys-33–Cys-55 form a C4-type zinc finger.

This sequence belongs to the AccD/PCCB family. In terms of assembly, acetyl-CoA carboxylase is a heterohexamer composed of biotin carboxyl carrier protein (AccB), biotin carboxylase (AccC) and two subunits each of ACCase subunit alpha (AccA) and ACCase subunit beta (AccD). The cofactor is Zn(2+).

The protein localises to the cytoplasm. It carries out the reaction N(6)-carboxybiotinyl-L-lysyl-[protein] + acetyl-CoA = N(6)-biotinyl-L-lysyl-[protein] + malonyl-CoA. It participates in lipid metabolism; malonyl-CoA biosynthesis; malonyl-CoA from acetyl-CoA: step 1/1. Component of the acetyl coenzyme A carboxylase (ACC) complex. Biotin carboxylase (BC) catalyzes the carboxylation of biotin on its carrier protein (BCCP) and then the CO(2) group is transferred by the transcarboxylase to acetyl-CoA to form malonyl-CoA. This Staphylococcus aureus (strain Newman) protein is Acetyl-coenzyme A carboxylase carboxyl transferase subunit beta.